The chain runs to 513 residues: GMP synthase [glutamine-hydrolyzing] (513 aa).

Residues 5–195 form the Glutamine amidotransferase type-1 domain; sequence LVLVIDFGGQ…VYNICGCTGD (191 aa). Catalysis depends on Cys82, which acts as the Nucleophile. Active-site residues include His169 and Glu171. The region spanning 196–388 is the GMPS ATP-PPase domain; that stretch reads WKMDSFVEKT…LGIPEKLVFR (193 aa). 223 to 229 contacts ATP; that stretch reads SGGVDSS.

Homodimer.

The catalysed reaction is XMP + L-glutamine + ATP + H2O = GMP + L-glutamate + AMP + diphosphate + 2 H(+). It participates in purine metabolism; GMP biosynthesis; GMP from XMP (L-Gln route): step 1/1. Catalyzes the synthesis of GMP from XMP. This Clostridium botulinum (strain Eklund 17B / Type B) protein is GMP synthase [glutamine-hydrolyzing].